A 343-amino-acid polypeptide reads, in one-letter code: Protein RecA (343 aa).

64-71 (GPESSGKT) serves as a coordination point for ATP.

This sequence belongs to the RecA family.

It localises to the cytoplasm. Its function is as follows. Can catalyze the hydrolysis of ATP in the presence of single-stranded DNA, the ATP-dependent uptake of single-stranded DNA by duplex DNA, and the ATP-dependent hybridization of homologous single-stranded DNAs. It interacts with LexA causing its activation and leading to its autocatalytic cleavage. The polypeptide is Protein RecA (Bacillus cereus (strain ATCC 10987 / NRS 248)).